Reading from the N-terminus, the 269-residue chain is 5'-nucleotidase SurE (269 aa).

A divalent metal cation is bound by residues Asp-11, Asp-12, Ser-43, and Asn-101.

Belongs to the SurE nucleotidase family. A divalent metal cation serves as cofactor.

The protein localises to the cytoplasm. The catalysed reaction is a ribonucleoside 5'-phosphate + H2O = a ribonucleoside + phosphate. In terms of biological role, nucleotidase that shows phosphatase activity on nucleoside 5'-monophosphates. This Prochlorococcus marinus (strain MIT 9301) protein is 5'-nucleotidase SurE.